Reading from the N-terminus, the 697-residue chain is Polyribonucleotide nucleotidyltransferase (697 aa).

Mg(2+)-binding residues include Asp486 and Asp492. The KH domain occupies 553–612; it reads PRIHTIKIHPDKIKDVIGKCGSVIRALTEETKTIIDIEDDGTVTVAATDSIKAQQAICRI. Positions 622–690 constitute an S1 motif domain; it reads GSIYHGKVTR…RQGRIRLSMK (69 aa).

The protein belongs to the polyribonucleotide nucleotidyltransferase family. Component of the RNA degradosome, which is a multiprotein complex involved in RNA processing and mRNA degradation. It depends on Mg(2+) as a cofactor.

The protein resides in the cytoplasm. It carries out the reaction RNA(n+1) + phosphate = RNA(n) + a ribonucleoside 5'-diphosphate. Its function is as follows. Involved in mRNA degradation. Catalyzes the phosphorolysis of single-stranded polyribonucleotides processively in the 3'- to 5'-direction. The chain is Polyribonucleotide nucleotidyltransferase from Baumannia cicadellinicola subsp. Homalodisca coagulata.